We begin with the raw amino-acid sequence, 56 residues long: Small ribosomal subunit protein uS14z/uS14y/uS14x (56 aa).

Residues C21, C24, C39, and C42 each coordinate Zn(2+).

The protein belongs to the universal ribosomal protein uS14 family. Requires Zn(2+) as cofactor.

The sequence is that of Small ribosomal subunit protein uS14z/uS14y/uS14x (RPS29A) from Arabidopsis thaliana (Mouse-ear cress).